The following is a 448-amino-acid chain: MKSLEYLTETGIKCLKCDEGAIIKVRSDVYCKQCYLRFIRGKQRKQMSSDKYKVKYLRDGASHSTEKVLLAFSGGVSSLVLLDVLARLLEEQKNTHRDLQGFELVVANISESDGTNLESLLSSSSIMQTLLELVGNYEVSIKVKVVTPNIDPVFLRRIGVDYEFNTFANNLSIEEQSVSSLAEILRASPNRSSSEDLRDVIFHQELLRLAQSEGCGTIVYGHSMSRLAIEVLALTVKGRGSNVHSTILDRVEDYCGDQISIIYPFRDLFEYELREYAVLSDLMQYESAFAKYAVPKSKVSKNMTVREILSMYLDRWDESGYLSTASTVVKIGEKLTVPTSQNNSSTYCCDICAKKIYQDPKDWLQMITVNEPAPLVSDEERDYLHQYLTSHTDTISKSGEHVNLCYGCITAINGAGGDSGVIWPLQKDVKFDHGEKEKAKVLKEYSLE.

Belongs to the CTU2/NCS2 family.

It is found in the cytoplasm. It functions in the pathway tRNA modification; 5-methoxycarbonylmethyl-2-thiouridine-tRNA biosynthesis. In terms of biological role, plays a central role in 2-thiolation of mcm(5)S(2)U at tRNA wobble positions of tRNA(Lys), tRNA(Glu) and tRNA(Gln). May act by forming a heterodimer with NCS6 that ligates sulfur from thiocarboxylated URM1 onto the uridine of tRNAs at wobble position. Prior mcm(5) tRNA modification by the elongator complex is required for 2-thiolation. May also be involved in protein urmylation. The sequence is that of Cytoplasmic tRNA 2-thiolation protein 2 from Lodderomyces elongisporus (strain ATCC 11503 / CBS 2605 / JCM 1781 / NBRC 1676 / NRRL YB-4239) (Yeast).